The chain runs to 212 residues: Regulatory protein RecX (212 aa).

It belongs to the RecX family.

The protein resides in the cytoplasm. Modulates RecA activity. The chain is Regulatory protein RecX from Clostridium botulinum (strain Eklund 17B / Type B).